The following is a 198-amino-acid chain: ATP synthase subunit b (198 aa).

A helical membrane pass occupies residues 49–67; it reads IWKWANFLILAGGLGYLVG.

This sequence belongs to the ATPase B chain family. As to quaternary structure, F-type ATPases have 2 components, F(1) - the catalytic core - and F(0) - the membrane proton channel. F(1) has five subunits: alpha(3), beta(3), gamma(1), delta(1), epsilon(1). F(0) has three main subunits: a(1), b(2) and c(10-14). The alpha and beta chains form an alternating ring which encloses part of the gamma chain. F(1) is attached to F(0) by a central stalk formed by the gamma and epsilon chains, while a peripheral stalk is formed by the delta and b chains.

It is found in the cell inner membrane. Its function is as follows. F(1)F(0) ATP synthase produces ATP from ADP in the presence of a proton or sodium gradient. F-type ATPases consist of two structural domains, F(1) containing the extramembraneous catalytic core and F(0) containing the membrane proton channel, linked together by a central stalk and a peripheral stalk. During catalysis, ATP synthesis in the catalytic domain of F(1) is coupled via a rotary mechanism of the central stalk subunits to proton translocation. In terms of biological role, component of the F(0) channel, it forms part of the peripheral stalk, linking F(1) to F(0). In Solibacter usitatus (strain Ellin6076), this protein is ATP synthase subunit b.